Here is a 522-residue protein sequence, read N- to C-terminus: Maturase K (522 aa).

This sequence belongs to the intron maturase 2 family. MatK subfamily.

It is found in the plastid. It localises to the chloroplast. In terms of biological role, usually encoded in the trnK tRNA gene intron. Probably assists in splicing its own and other chloroplast group II introns. This is Maturase K from Iris sanguinea (Japanese iris).